A 273-amino-acid polypeptide reads, in one-letter code: NADPH-dependent 7-cyano-7-deazaguanine reductase (273 aa).

80–82 (IES) is a substrate binding site. 82–83 (SK) contributes to the NADPH binding site. Residue Cys-180 is the Thioimide intermediate of the active site. Catalysis depends on Asp-187, which acts as the Proton donor. 219–220 (HE) is a substrate binding site. 248 to 249 (RG) lines the NADPH pocket.

It belongs to the GTP cyclohydrolase I family. QueF type 2 subfamily. Homodimer.

Its subcellular location is the cytoplasm. The enzyme catalyses 7-aminomethyl-7-carbaguanine + 2 NADP(+) = 7-cyano-7-deazaguanine + 2 NADPH + 3 H(+). The protein operates within tRNA modification; tRNA-queuosine biosynthesis. Its function is as follows. Catalyzes the NADPH-dependent reduction of 7-cyano-7-deazaguanine (preQ0) to 7-aminomethyl-7-deazaguanine (preQ1). This chain is NADPH-dependent 7-cyano-7-deazaguanine reductase, found in Bordetella avium (strain 197N).